The following is a 310-amino-acid chain: UPF0761 membrane protein VF_0100 (310 aa).

6 helical membrane passes run 34-54 (YMAY…LSVL), 97-117 (MTAV…SSID), 136-156 (FSLY…SLAA), 178-198 (LLGW…YLLV), 207-227 (HALI…VGFA), and 242-262 (ALAA…IVLI).

The protein belongs to the UPF0761 family.

It is found in the cell inner membrane. This Aliivibrio fischeri (strain ATCC 700601 / ES114) (Vibrio fischeri) protein is UPF0761 membrane protein VF_0100.